The sequence spans 409 residues: Putative lipoate-protein ligase A (409 aa).

Residues 146 to 330 form the BPL/LPL catalytic domain; it reads GPDNCRLVFY…RFQKTFKVDG (185 aa). Residues Arg-188, 193–196, and Lys-249 contribute to the ATP site; that span reads GTVL. Residue Lys-249 coordinates (R)-lipoate.

Belongs to the LplA family. In terms of assembly, monomer.

The enzyme catalyses L-lysyl-[lipoyl-carrier protein] + (R)-lipoate + ATP = N(6)-[(R)-lipoyl]-L-lysyl-[lipoyl-carrier protein] + AMP + diphosphate + H(+). The protein operates within protein modification; protein lipoylation via exogenous pathway; protein N(6)-(lipoyl)lysine from lipoate: step 1/2. Its pathway is protein modification; protein lipoylation via exogenous pathway; protein N(6)-(lipoyl)lysine from lipoate: step 2/2. In terms of biological role, catalyzes both the ATP-dependent activation of exogenously supplied lipoate to lipoyl-AMP and the transfer of the activated lipoyl onto the lipoyl domains of lipoate-dependent enzymes. This is Putative lipoate-protein ligase A (AIM22) from Saccharomyces cerevisiae (strain YJM789) (Baker's yeast).